The sequence spans 283 residues: Demethylrebeccamycin-D-glucose O-methyltransferase (283 aa).

Residues serine 101, glutamine 106, 129–130 (DA), leucine 146, and histidine 151 contribute to the S-adenosyl-L-methionine site.

It belongs to the methyltransferase superfamily. In terms of assembly, monomer.

It catalyses the reaction 4'-demethylrebeccamycin + S-adenosyl-L-methionine = rebeccamycin + S-adenosyl-L-homocysteine + H(+). Its function is as follows. Glycosyl O-methyltransferase that catalyzes the final step in the biosynthesis of rebeccamycin, an indolocarbazole alkaloid that inhibits topoisomerase 1. Has broad substrate specificity and functions as glycosyl O-methyltransferase on a number of rebeccamycin analogs. The polypeptide is Demethylrebeccamycin-D-glucose O-methyltransferase (rebM) (Lentzea aerocolonigenes (Lechevalieria aerocolonigenes)).